A 370-amino-acid polypeptide reads, in one-letter code: tRNA-specific 2-thiouridylase MnmA (370 aa).

ATP is bound by residues 9 to 16 (GLSGGVDS) and M35. The tract at residues 95–97 (NPD) is interaction with target base in tRNA. The active-site Nucleophile is the C100. An intrachain disulfide couples C100 to C198. G124 provides a ligand contact to ATP. Positions 148 to 150 (KDQ) are interaction with tRNA. C198 acts as the Cysteine persulfide intermediate in catalysis. Positions 316–317 (RY) are interaction with tRNA.

It belongs to the MnmA/TRMU family.

The protein localises to the cytoplasm. The catalysed reaction is S-sulfanyl-L-cysteinyl-[protein] + uridine(34) in tRNA + AH2 + ATP = 2-thiouridine(34) in tRNA + L-cysteinyl-[protein] + A + AMP + diphosphate + H(+). In terms of biological role, catalyzes the 2-thiolation of uridine at the wobble position (U34) of tRNA, leading to the formation of s(2)U34. This is tRNA-specific 2-thiouridylase MnmA from Acidovorax ebreus (strain TPSY) (Diaphorobacter sp. (strain TPSY)).